The primary structure comprises 513 residues: Prostaglandin E2 receptor EP4 subtype (513 aa).

The Extracellular portion of the chain corresponds to 1–44 (MAEVGGTIPRSNRELQRCVLLTTTIMSIPGVNASFSSTPERLNS). The N-linked (GlcNAc...) asparagine glycan is linked to Asn-32. The chain crosses the membrane as a helical span at residues 45–68 (PVTIPAVMFIFGVVGNLVAIVVLC). Residues 69–80 (KSRKEQKETTFY) lie on the Cytoplasmic side of the membrane. The helical transmembrane segment at 81–104 (TLVCGLAVTDLLGTLLVSPVTIAT) threads the bilayer. Residues 105–121 (YMKGQWPGDQALCDYST) are Extracellular-facing. An intrachain disulfide couples Cys-117 to Cys-195. Residues 122–140 (FILLFFGLSGLSIICAMSI) traverse the membrane as a helical segment. The Cytoplasmic portion of the chain corresponds to 141–160 (ERYLAINHAYFYSHYVDKRL). Residues 161 to 185 (AGLTLFAIYASNVLFCALPNMGLGR) traverse the membrane as a helical segment. Topologically, residues 186 to 209 (SERQYPGTWCFIDWTTNVTAYAAF) are extracellular. Residues 210–236 (SYMYAGFSSFLILATVLCNVLVCGALL) form a helical membrane-spanning segment. Over 237-295 (RMHRQFMRRTSLGTEQHHAAAAAAVASVACRGHAGASPALQRLSDFRRRRSFRRIAGAE) the chain is Cytoplasmic. A helical transmembrane segment spans residues 296–323 (IQMVILLIATSLVVLICSIPLVVRVFIN). Residues 324-340 (QLYQPNVVKDISRNPDL) lie on the Extracellular side of the membrane. The helical transmembrane segment at 341 to 360 (QAIRIASVNPILDPWIYILL) threads the bilayer. At 361-513 (RKTVLSKAIE…ETLKLSEKCI (153 aa)) the chain is on the cytoplasmic side. The disordered stretch occupies residues 383–403 (GRDSSAQHCSESRRTSSAMSG). A compositionally biased stretch (polar residues) spans 384–403 (RDSSAQHCSESRRTSSAMSG). Phosphoserine occurs at positions 402, 405, and 407.

The protein belongs to the G-protein coupled receptor 1 family. As to quaternary structure, interacts with FEM1A. Post-translationally, phosphorylation mediates agonist-mediated desensitization by promoting cytoplasmic retention. In terms of tissue distribution, abundant expression in ileum, thymus and mastocytoma P-815 cells. Also observed in lung, spleen, heart and uterus.

It is found in the cell membrane. Its function is as follows. Receptor for prostaglandin E2 (PGE2). The activity of this receptor is mediated by G(s) proteins that stimulate adenylate cyclase. Has a relaxing effect on smooth muscle. May play an important role in regulating renal hemodynamics, intestinal epithelial transport, adrenal aldosterone secretion, and uterine function. The chain is Prostaglandin E2 receptor EP4 subtype (Ptger4) from Mus musculus (Mouse).